The sequence spans 278 residues: NAD-capped RNA hydrolase NudC (278 aa).

Substrate is bound at residue Arg84. Residues Cys114 and Cys117 each contribute to the Zn(2+) site. Glu127 serves as a coordination point for substrate. Cys132 is a Zn(2+) binding site. Tyr140 is a substrate binding site. A Nudix hydrolase domain is found at 141–264 (PRISPSMIVL…SIARYLIEAY (124 aa)). The a divalent metal cation site is built by Ala174, Glu190, and Glu194. Residues 175–196 (GFVEPGESAEDCVHREVMEEVQ) carry the Nudix box motif. Position 208–215 (208–215 (QCWPFPHS)) interacts with substrate. Residue Glu235 coordinates a divalent metal cation. Ala257 provides a ligand contact to substrate.

This sequence belongs to the Nudix hydrolase family. NudC subfamily. Homodimer. The cofactor is Mg(2+). It depends on Mn(2+) as a cofactor. Zn(2+) serves as cofactor.

The enzyme catalyses a 5'-end NAD(+)-phospho-ribonucleoside in mRNA + H2O = a 5'-end phospho-adenosine-phospho-ribonucleoside in mRNA + beta-nicotinamide D-ribonucleotide + 2 H(+). It carries out the reaction NAD(+) + H2O = beta-nicotinamide D-ribonucleotide + AMP + 2 H(+). The catalysed reaction is NADH + H2O = reduced beta-nicotinamide D-ribonucleotide + AMP + 2 H(+). Functionally, mRNA decapping enzyme that specifically removes the nicotinamide adenine dinucleotide (NAD) cap from a subset of mRNAs by hydrolyzing the diphosphate linkage to produce nicotinamide mononucleotide (NMN) and 5' monophosphate mRNA. The NAD-cap is present at the 5'-end of some mRNAs and stabilizes RNA against 5'-processing. Has preference for mRNAs with a 5'-end purine. Catalyzes the hydrolysis of a broad range of dinucleotide pyrophosphates. This chain is NAD-capped RNA hydrolase NudC, found in Pseudomonas syringae pv. syringae (strain B728a).